Reading from the N-terminus, the 628-residue chain is Probable potassium transport system protein Kup (628 aa).

The next 12 membrane-spanning stretches (helical) occupy residues 20-40 (ALLT…SPLY), 63-83 (IISM…VMLV), 110-130 (FVAV…VITP), 151-171 (FILP…PLGT), 178-198 (FGPI…PQII), 212-232 (ALGL…AVVL), 256-276 (WFCV…ALVI), 296-316 (IPLV…VISG), 346-366 (IYMP…VLVF), 375-395 (AYGL…LIYV), 398-418 (TWWK…LLFA), and 422-442 (TKIH…IVVM).

It belongs to the HAK/KUP transporter (TC 2.A.72) family.

It localises to the cell membrane. It carries out the reaction K(+)(in) + H(+)(in) = K(+)(out) + H(+)(out). In terms of biological role, transport of potassium into the cell. Likely operates as a K(+):H(+) symporter. This is Probable potassium transport system protein Kup from Corynebacterium glutamicum (strain R).